Reading from the N-terminus, the 832-residue chain is Vacuolar transmembrane transporter penV (832 aa).

The next 2 helical transmembrane spans lie at 39 to 59 (LYTQFVISTALGLSAFLAFCI) and 117 to 137 (FFKFAIRFLLAVFIFAVAIIL). Residues 152–171 (WDNPPGNKTTSPIDGSEKEK) form a disordered region. Asn-158 is a glycosylation site (N-linked (GlcNAc...) asparagine). A helical transmembrane segment spans residues 178–198 (YLWIYVLFAYVFSGLAIYMLL). N-linked (GlcNAc...) asparagine glycosylation is present at Asn-214. Residues 291–322 (NDGNALPLTEQQPRDADDERSGLLSGHDNEHV) form a disordered region. Residues 302-321 (QPRDADDERSGLLSGHDNEH) show a composition bias toward basic and acidic residues. 9 consecutive transmembrane segments (helical) span residues 434–454 (FVIGFLTVFWSVLLVPIASLL), 483–503 (GLPTLAFSLLTVAVPYLYEWL), 524–544 (FFFSFFNLFLLFTVFGTASGF), 560–582 (TIALALANSLEGLAPFYINLLIL), 587–608 (LFPFRLLEFGSVALYPFQFLSA), 623–645 (FSYGFSIPQTILILVICVVYSVF), 650–672 (LICLFGLIYFTVGKFIYKYQLLY), 687–707 (MICNRVFVGLLVHQLAMIGVL), and 713–733 (ITRSLLLVPLLGFTVWFSYWF). A disordered region spans residues 754–777 (PGGGDISPSPSSTLSPPSGLDRDS). Over residues 759 to 771 (ISPSPSSTLSPPS) the composition is skewed to low complexity.

Belongs to the CSC1 (TC 1.A.17) family.

The protein localises to the vacuole membrane. Functionally, vacuolar transmembrane transporter that participates in the first stage of the beta-lactam biosynthesis (the formation of the ACV tripeptide), probably taking part in the supply of amino acids from the vacuolar lumen to the vacuole-anchored ACV synthetase. This chain is Vacuolar transmembrane transporter penV, found in Penicillium rubens (strain ATCC 28089 / DSM 1075 / NRRL 1951 / Wisconsin 54-1255) (Penicillium chrysogenum).